A 383-amino-acid chain; its full sequence is Subtelomeric hrmA-associated cluster protein AFUB_078970 (383 aa).

Disordered regions lie at residues 118–145 (NPVSEVPESPPSTVKSSGDASVSDKDDD) and 249–318 (QATQ…SARP). Residues 119–134 (PVSEVPESPPSTVKSS) are compositionally biased toward low complexity. Residues 318-364 (PYSAAEDDILQTLVARGLAWEEIEKEFGLRFAKRTMRSLQMRWSRKL) enclose the Myb-like domain.

Functionally, myb-like domain-containing protein; part of the subtelomeric hrmA-associated cluster (HAC) containing genes that alter the hyphal surface (such as reduced total chitin or increased beta-glucan exposure) and perturb inter-hyphal interactions within the developing biofilms, resulting in a loss of vertically aligned polarized growing filaments. Consequently, this hypoxia-typic morphotype (called H-MORPH) with altered biofilm architecture leads to increased hypoxia fitness, increased host inflammation, rapid disease progression, and mortality in a murine model of invasive aspergillosis. This chain is Subtelomeric hrmA-associated cluster protein AFUB_078970, found in Aspergillus fumigatus (strain CBS 144.89 / FGSC A1163 / CEA10) (Neosartorya fumigata).